Consider the following 411-residue polypeptide: Serine--tRNA ligase (411 aa).

Position 226–228 (Thr-226–Glu-228) interacts with L-serine. Arg-257 to Glu-259 lines the ATP pocket. Glu-280 contributes to the L-serine binding site. Position 344–347 (Glu-344–Ser-347) interacts with ATP. Ser-379 is a binding site for L-serine.

It belongs to the class-II aminoacyl-tRNA synthetase family. Type-1 seryl-tRNA synthetase subfamily. As to quaternary structure, homodimer. The tRNA molecule binds across the dimer.

Its subcellular location is the cytoplasm. The catalysed reaction is tRNA(Ser) + L-serine + ATP = L-seryl-tRNA(Ser) + AMP + diphosphate + H(+). It catalyses the reaction tRNA(Sec) + L-serine + ATP = L-seryl-tRNA(Sec) + AMP + diphosphate + H(+). It functions in the pathway aminoacyl-tRNA biosynthesis; selenocysteinyl-tRNA(Sec) biosynthesis; L-seryl-tRNA(Sec) from L-serine and tRNA(Sec): step 1/1. Catalyzes the attachment of serine to tRNA(Ser). Is also able to aminoacylate tRNA(Sec) with serine, to form the misacylated tRNA L-seryl-tRNA(Sec), which will be further converted into selenocysteinyl-tRNA(Sec). The chain is Serine--tRNA ligase from Campylobacter jejuni subsp. jejuni serotype O:23/36 (strain 81-176).